The primary structure comprises 314 residues: DNA topoisomerase 1 (314 aa).

Positions 73–314 (GKMHVQRRNS…TDYITNTQTV (242 aa)) constitute a Topo IB-type catalytic domain. Residue Tyr273 is the O-(3'-phospho-DNA)-tyrosine intermediate of the active site.

This sequence belongs to the type IB topoisomerase family.

The enzyme catalyses ATP-independent breakage of single-stranded DNA, followed by passage and rejoining.. Functionally, releases the supercoiling and torsional tension of DNA introduced during the DNA replication and transcription by transiently cleaving and rejoining one strand of the DNA duplex. Introduces a single-strand break via transesterification at a target site in duplex DNA. The scissile phosphodiester is attacked by the catalytic tyrosine of the enzyme, resulting in the formation of a DNA-(3'-phosphotyrosyl)-enzyme intermediate and the expulsion of a 5'-OH DNA strand. The free DNA strand then undergoes passage around the unbroken strand thus removing DNA supercoils. Finally, in the religation step, the DNA 5'-OH attacks the covalent intermediate to expel the active-site tyrosine and restore the DNA phosphodiester backbone. The sequence is that of DNA topoisomerase 1 (TOP1) from Oryctolagus cuniculus (Rabbit).